The following is a 1359-amino-acid chain: Tripeptidyl-peptidase 2 (1359 aa).

Residues 45-81 (AASTTTRGGPSPSAGVAPRAMPSSSSSPPSAAEGTTA) form a disordered region. The segment covering 64–81 (AMPSSSSSPPSAAEGTTA) has biased composition (low complexity). The region spanning 102 to 600 (EIGVDRFLAA…HGLLQVDRAF (499 aa)) is the Peptidase S8 domain. Active-site charge relay system residues include aspartate 126, histidine 353, and serine 539.

The protein belongs to the peptidase S8 family.

The catalysed reaction is Release of an N-terminal tripeptide from a polypeptide.. Serine protease that may function in the proteasome pathway. The polypeptide is Tripeptidyl-peptidase 2 (TPP2) (Oryza sativa subsp. japonica (Rice)).